Consider the following 500-residue polypeptide: Transcription termination/antitermination protein NusA (500 aa).

The region spanning 135–205 (GEIVTGVVKK…RGAQLFVTRS (71 aa)) is the S1 motif domain. Residues 307–373 (KHTMDIAVEA…FTKYLDIDEE (67 aa)) enclose the KH domain. Repeat copies occupy residues 369–419 (DIDE…KNAL) and 444–494 (GLDR…RNIC). Residues 369 to 494 (DIDEEFATVL…ELIMAARNIC (126 aa)) form a 2 X 51 AA approximate repeats region.

This sequence belongs to the NusA family. As to quaternary structure, monomer. Binds directly to the core enzyme of the DNA-dependent RNA polymerase and to nascent RNA.

The protein localises to the cytoplasm. Its function is as follows. Participates in both transcription termination and antitermination. This chain is Transcription termination/antitermination protein NusA, found in Salmonella typhimurium (strain LT2 / SGSC1412 / ATCC 700720).